A 360-amino-acid polypeptide reads, in one-letter code: Protein Wnt-5b (360 aa).

The N-terminal stretch at 1 to 16 (MTPILRLLLLSSLLSC) is a signal peptide. The cysteines at positions 84 and 95 are disulfide-linked. N94 and N100 each carry an N-linked (GlcNAc...) asparagine glycan. Cystine bridges form between C134–C142, C144–C162, C218–C232, C220–C227, C289–C320, C305–C315, C319–C359, C335–C350, C337–C347, and C342–C343. The O-palmitoleoyl serine; by PORCN moiety is linked to residue S224. Residues N292 and N306 are each glycosylated (N-linked (GlcNAc...) asparagine).

Belongs to the Wnt family. Post-translationally, palmitoleoylation is required for efficient binding to frizzled receptors. Depalmitoleoylation leads to Wnt signaling pathway inhibition.

Its subcellular location is the secreted. The protein localises to the extracellular space. It is found in the extracellular matrix. Functionally, ligand for members of the frizzled family of seven transmembrane receptors. Probable developmental protein. May be a signaling molecule which affects the development of discrete regions of tissues. Is likely to signal over only few cell diameters. The protein is Protein Wnt-5b (wnt5b) of Xenopus laevis (African clawed frog).